We begin with the raw amino-acid sequence, 2968 residues long: Trinucleotide repeat-containing gene 18 protein (2968 aa).

2 disordered regions span residues 1-24 (MDGR…SGLA) and 139-261 (GSPL…LAER). Over residues 139–150 (GSPLLSQLGQPS) the composition is skewed to low complexity. Composition is skewed to basic and acidic residues over residues 221–233 (GKKD…EEAS) and 243–260 (QEAR…RLAE). Position 263 is a phosphoserine (serine 263). Basic and acidic residues predominate over residues 304-322 (GAKEAARQDEGARLLRRTE). 2 disordered regions span residues 304-356 (GAKE…PAGV) and 381-488 (FDER…PAAQ). Residues 327–351 (GPRPCPSPLPPPPAPPKGPPAPPAA) are compositionally biased toward pro residues. Basic and acidic residues-rich tracts occupy residues 395 to 405 (RDARAREREAG), 419 to 431 (PLDR…EKNS), and 464 to 479 (ELLK…ERAP). A Phosphoserine modification is found at serine 611. 8 disordered regions span residues 612–679 (PFGG…EVRH), 941–1002 (EHRA…SPVA), 1019–1055 (PAYA…PENV), 1106–1190 (DADG…MATP), 1212–1236 (SCAE…PGRT), 1279–1306 (LAQV…GQCP), 1497–1566 (KQRE…SDDY), and 1687–1855 (SLKS…RERA). Residue lysine 620 forms a Glycyl lysine isopeptide (Lys-Gly) (interchain with G-Cter in SUMO2) linkage. Composition is skewed to basic and acidic residues over residues 651 to 660 (LKRDPERPES) and 941 to 955 (EHRA…KRGL). A coiled-coil region spans residues 916–949 (LQQQAAQALELQRSAQLVQERLKAQEHRAEMEEK). Composition is skewed to low complexity over residues 966–983 (AGPG…AGPA) and 1019–1031 (PAYA…SSHP). Pro residues predominate over residues 1032–1043 (TSPPPASPPPTP). Residues 1046–1055 (TRKEEAPENV) are compositionally biased toward basic and acidic residues. Serine 1127 and serine 1136 each carry phosphoserine. Basic and acidic residues predominate over residues 1142-1162 (EPLREGPEEEPLAEREVKAEV). Pro residues predominate over residues 1171 to 1181 (ELPPLESPLPL). Residues 1481-1516 (LDFRMRLAEVQRQYKEKQRELVKLQRRRDSEDRREE) adopt a coiled-coil conformation. The segment covering 1497–1519 (KQRELVKLQRRRDSEDRREEPHR) has biased composition (basic and acidic residues). Residues 1520–1534 (SLARRGPGRPRKRTH) show a composition bias toward basic residues. The residue at position 1540 (serine 1540) is a Phosphoserine. The segment covering 1549 to 1563 (GHSSGKLSSKSLLTS) has biased composition (low complexity). Positions 1816–1842 (SSEESFDQDESSEEEDEEEELEEEDEA) are enriched in acidic residues. Serine 1857 and serine 1863 each carry phosphoserine. Disordered regions lie at residues 1912 to 2148 (YTDS…LTPA) and 2295 to 2771 (LLVP…RLPS). Composition is skewed to basic and acidic residues over residues 1957–1968 (SPDKAKLAVEKG) and 1993–2004 (LWTRRRSERIFL). A compositionally biased stretch (low complexity) spans 2007–2024 (ASAAAPAPVSTAPATKTS). Residues 2034–2046 (PRKDAGRAKDRKD) are compositionally biased toward basic and acidic residues. The span at 2069–2085 (ALPSEARAPHASSLTAA) shows a compositional bias: low complexity. The segment covering 2093–2103 (KGKEVKKENRG) has biased composition (basic and acidic residues). A Phosphothreonine modification is found at threonine 2146. The segment covering 2307–2316 (TSKDTGEGKD) has biased composition (basic and acidic residues). Positions 2329–2338 (ARGRGRKPSA) are enriched in basic residues. The span at 2365-2374 (EPSSTPGSKK) shows a compositional bias: low complexity. Residues 2375 to 2384 (SPPEPVDKRA) are compositionally biased toward basic and acidic residues. Residues 2390–2401 (RPAPPQPSPAPP) are compositionally biased toward pro residues. The segment covering 2411–2433 (PFAELPAPATSLAPAPLITMPAT) has biased composition (low complexity). 2 stretches are compositionally biased toward basic and acidic residues: residues 2441-2468 (RAAE…DHEG) and 2477-2487 (AKEALLLREDP). Composition is skewed to low complexity over residues 2559 to 2580 (SSSS…SGSE) and 2603 to 2671 (SAAS…SSSS). Residues 2673 to 2685 (TDEDSSCSSDDEA) show a composition bias toward acidic residues. Residues 2723–2736 (APQPQAPPPQPTQP) are compositionally biased toward pro residues. Serine 2771 carries the phosphoserine modification. The 146-residue stretch at 2817-2962 (EMIRIGDCAV…PTTGMIFSTD (146 aa)) folds into the BAH domain.

In Homo sapiens (Human), this protein is Trinucleotide repeat-containing gene 18 protein.